The sequence spans 160 residues: Cyanate hydratase (160 aa).

Catalysis depends on residues R100, E103, and S126.

Belongs to the cyanase family.

It carries out the reaction cyanate + hydrogencarbonate + 3 H(+) = NH4(+) + 2 CO2. In terms of biological role, catalyzes the reaction of cyanate with bicarbonate to produce ammonia and carbon dioxide. In Penicillium rubens (strain ATCC 28089 / DSM 1075 / NRRL 1951 / Wisconsin 54-1255) (Penicillium chrysogenum), this protein is Cyanate hydratase.